The following is a 98-amino-acid chain: Co-chaperonin GroES (98 aa).

Belongs to the GroES chaperonin family. Heptamer of 7 subunits arranged in a ring. Interacts with the chaperonin GroEL.

The protein resides in the cytoplasm. Functionally, together with the chaperonin GroEL, plays an essential role in assisting protein folding. The GroEL-GroES system forms a nano-cage that allows encapsulation of the non-native substrate proteins and provides a physical environment optimized to promote and accelerate protein folding. GroES binds to the apical surface of the GroEL ring, thereby capping the opening of the GroEL channel. The chain is Co-chaperonin GroES from Allorhizobium ampelinum (strain ATCC BAA-846 / DSM 112012 / S4) (Agrobacterium vitis (strain S4)).